A 244-amino-acid chain; its full sequence is L-xylulose reductase (244 aa).

N-acetylmethionine is present on Met-1. Residue Leu-11–Arg-39 coordinates NADP(+). Arg-21 carries the omega-N-methylarginine modification. Ser-46 is modified (phosphoserine). Ser-136 provides a ligand contact to substrate. Catalysis depends on Tyr-149, which acts as the Proton acceptor. Residue Lys-153 is part of the active site.

The protein belongs to the short-chain dehydrogenases/reductases (SDR) family. In terms of assembly, homotetramer. As to expression, highly expressed in kidney and liver. Expressed in epididymis. Weakly expressed in brain, heart, lung, spleen and testis.

It is found in the membrane. Its subcellular location is the cytoplasmic vesicle. The protein localises to the secretory vesicle. The protein resides in the acrosome. It carries out the reaction xylitol + NADP(+) = L-xylulose + NADPH + H(+). In terms of biological role, catalyzes the NADPH-dependent reduction of several pentoses, tetroses, trioses, alpha-dicarbonyl compounds and L-xylulose. Participates in the uronate cycle of glucose metabolism. May play a role in the water absorption and cellular osmoregulation in the proximal renal tubules by producing xylitol, an osmolyte, thereby preventing osmolytic stress from occurring in the renal tubules. This chain is L-xylulose reductase (DCXR), found in Mesocricetus auratus (Golden hamster).